A 264-amino-acid polypeptide reads, in one-letter code: SPARC (264 aa).

The N-terminal stretch at 1–16 (MRYALAACLLLLAASS) is a signal peptide. Residues 52–74 (PCEDHQCGWGKECVVGKKGEPTC) form the Follistatin-like domain. Disulfide bonds link Cys53-Cys64, Cys58-Cys74, Cys76-Cys110, Cys80-Cys103, Cys92-Cys135, Cys141-Cys228, and Cys236-Cys252. A Kazal-like domain is found at 68–137 (KKGEPTCECI…HLEYLGECKK (70 aa)). An N-linked (GlcNAc...) asparagine glycan is attached at Asn96. In terms of domain architecture, EF-hand spans 224-259 (PMESCIKPFLEGCDANNDGNISIKEWGKCLGLKEGE). Residues Asp237, Asn239, Asp241, Asn243, and Glu248 each contribute to the Ca(2+) site. Asn243 is a glycosylation site (N-linked (GlcNAc...) asparagine).

This sequence belongs to the SPARC family. Expressed by body wall and sex muscle cells. Probable association with basement membranes.

Its subcellular location is the secreted. The protein localises to the extracellular space. It is found in the extracellular matrix. It localises to the basement membrane. Functionally, has a high affinity for collagen. Affects nematode body morphology and mobility. Essential for C.elegans development and muscle function. The cysteine-rich region could have protease inhibitory activity or may provide the framework for a protein binding module. Probable role in skeletal morphogenesis. This chain is SPARC (ost-1), found in Caenorhabditis elegans.